A 152-amino-acid chain; its full sequence is Ribosome maturation factor RimP (152 aa).

It belongs to the RimP family.

It is found in the cytoplasm. Required for maturation of 30S ribosomal subunits. The protein is Ribosome maturation factor RimP of Desulfatibacillum aliphaticivorans.